The primary structure comprises 301 residues: Coiled-coil domain-containing protein 50 (301 aa).

A coiled-coil region spans residues 57–131 (QVAKQLQEEE…LQEEKKRKKH (75 aa)). 3 stretches are compositionally biased toward basic and acidic residues: residues 123 to 142 (QEEK…KVYE), 161 to 175 (VYDK…SDAE), and 214 to 262 (AFKK…DKSS). Disordered stretches follow at residues 123–175 (QEEK…SDAE) and 214–301 (AFKK…RRKQ).

In terms of processing, phosphorylated on tyrosine residues.

Its function is as follows. Involved in EGFR signaling. In Gallus gallus (Chicken), this protein is Coiled-coil domain-containing protein 50 (CCDC50).